A 297-amino-acid chain; its full sequence is UDP-N-acetylenolpyruvoylglucosamine reductase (297 aa).

In terms of domain architecture, FAD-binding PCMH-type spans 26 to 191 (KSGGTADWLF…VAARFRGHPG (166 aa)). Residue R171 is part of the active site. The Proton donor role is filled by S220. The active site involves E290.

It belongs to the MurB family. Requires FAD as cofactor.

Its subcellular location is the cytoplasm. The catalysed reaction is UDP-N-acetyl-alpha-D-muramate + NADP(+) = UDP-N-acetyl-3-O-(1-carboxyvinyl)-alpha-D-glucosamine + NADPH + H(+). It participates in cell wall biogenesis; peptidoglycan biosynthesis. In terms of biological role, cell wall formation. The polypeptide is UDP-N-acetylenolpyruvoylglucosamine reductase (Novosphingobium aromaticivorans (strain ATCC 700278 / DSM 12444 / CCUG 56034 / CIP 105152 / NBRC 16084 / F199)).